A 66-amino-acid polypeptide reads, in one-letter code: Large ribosomal subunit protein bL32 (66 aa).

This sequence belongs to the bacterial ribosomal protein bL32 family.

The protein is Large ribosomal subunit protein bL32 of Rickettsia conorii (strain ATCC VR-613 / Malish 7).